Here is a 333-residue protein sequence, read N- to C-terminus: 4-hydroxy-3-methylbut-2-enyl diphosphate reductase (333 aa).

C34 is a binding site for [4Fe-4S] cluster. H63 and H96 together coordinate (2E)-4-hydroxy-3-methylbut-2-enyl diphosphate. Dimethylallyl diphosphate contacts are provided by H63 and H96. 2 residues coordinate isopentenyl diphosphate: H63 and H96. C118 contacts [4Fe-4S] cluster. (2E)-4-hydroxy-3-methylbut-2-enyl diphosphate is bound at residue H146. H146 serves as a coordination point for dimethylallyl diphosphate. An isopentenyl diphosphate-binding site is contributed by H146. The active-site Proton donor is the E148. (2E)-4-hydroxy-3-methylbut-2-enyl diphosphate is bound at residue T186. C216 is a binding site for [4Fe-4S] cluster. Residues S244, S245, N246, and S289 each contribute to the (2E)-4-hydroxy-3-methylbut-2-enyl diphosphate site. Residues S244, S245, N246, and S289 each coordinate dimethylallyl diphosphate. Positions 244, 245, 246, and 289 each coordinate isopentenyl diphosphate.

Belongs to the IspH family. It depends on [4Fe-4S] cluster as a cofactor.

It catalyses the reaction isopentenyl diphosphate + 2 oxidized [2Fe-2S]-[ferredoxin] + H2O = (2E)-4-hydroxy-3-methylbut-2-enyl diphosphate + 2 reduced [2Fe-2S]-[ferredoxin] + 2 H(+). It carries out the reaction dimethylallyl diphosphate + 2 oxidized [2Fe-2S]-[ferredoxin] + H2O = (2E)-4-hydroxy-3-methylbut-2-enyl diphosphate + 2 reduced [2Fe-2S]-[ferredoxin] + 2 H(+). It participates in isoprenoid biosynthesis; dimethylallyl diphosphate biosynthesis; dimethylallyl diphosphate from (2E)-4-hydroxy-3-methylbutenyl diphosphate: step 1/1. Its pathway is isoprenoid biosynthesis; isopentenyl diphosphate biosynthesis via DXP pathway; isopentenyl diphosphate from 1-deoxy-D-xylulose 5-phosphate: step 6/6. Functionally, catalyzes the conversion of 1-hydroxy-2-methyl-2-(E)-butenyl 4-diphosphate (HMBPP) into a mixture of isopentenyl diphosphate (IPP) and dimethylallyl diphosphate (DMAPP). Acts in the terminal step of the DOXP/MEP pathway for isoprenoid precursor biosynthesis. This is 4-hydroxy-3-methylbut-2-enyl diphosphate reductase from Mycolicibacterium gilvum (strain PYR-GCK) (Mycobacterium gilvum (strain PYR-GCK)).